Consider the following 404-residue polypeptide: MKLPIYLDYSATTPVDPRVAEKMMQFLTMDGTFGNPASRSHRFGWQAEEAVDIARNQVADLIGADPREIVFTSGATESDNLAIKGAANFYQKKGKHIITSKTEHKAVLDTCRQLEREGFEVTYLAPQSNGIIDLKELEAAMRDDTILVSIMHVNNEIGVVQDIATIGEMCRARGIIYHVDATQSVGKLPIDLTQLKVDLMSFTGHKIYGPKGIGALYVRRKPRIRIEAQMHGGGHERGMRSGTLPVHQIVGMGEAYRIAKEEMASEMERLRGLRNRLWNGIKDIEEVYLNGDLEQGVPTILNVSFNYVEGESLIMALKDLAVSSGSACTSASLEPSYVLRALGMNDELAHSSIRFSLGRFTTEEEIDYTIELVRKSIGRLRDLSPLWEMFKQGVDLTTIEWAHH.

Residues 75 to 76 (AT), N155, Q183, and 203 to 205 (TGH) each bind pyridoxal 5'-phosphate. Position 206 is an N6-(pyridoxal phosphate)lysine (K206). T243 serves as a coordination point for pyridoxal 5'-phosphate. C328 functions as the Cysteine persulfide intermediate in the catalytic mechanism. C328 contacts [2Fe-2S] cluster.

The protein belongs to the class-V pyridoxal-phosphate-dependent aminotransferase family. NifS/IscS subfamily. As to quaternary structure, homodimer. Forms a heterotetramer with IscU, interacts with other sulfur acceptors. It depends on pyridoxal 5'-phosphate as a cofactor.

The protein localises to the cytoplasm. It carries out the reaction (sulfur carrier)-H + L-cysteine = (sulfur carrier)-SH + L-alanine. The protein operates within cofactor biosynthesis; iron-sulfur cluster biosynthesis. In terms of biological role, master enzyme that delivers sulfur to a number of partners involved in Fe-S cluster assembly, tRNA modification or cofactor biosynthesis. Catalyzes the removal of elemental sulfur atoms from cysteine to produce alanine. Functions as a sulfur delivery protein for Fe-S cluster synthesis onto IscU, an Fe-S scaffold assembly protein, as well as other S acceptor proteins. This Cronobacter sakazakii (strain ATCC BAA-894) (Enterobacter sakazakii) protein is Cysteine desulfurase IscS.